The primary structure comprises 90 residues: Small ribosomal subunit protein uS15 (90 aa).

Belongs to the universal ribosomal protein uS15 family. Part of the 30S ribosomal subunit. Forms a bridge to the 50S subunit in the 70S ribosome, contacting the 23S rRNA.

One of the primary rRNA binding proteins, it binds directly to 16S rRNA where it helps nucleate assembly of the platform of the 30S subunit by binding and bridging several RNA helices of the 16S rRNA. Its function is as follows. Forms an intersubunit bridge (bridge B4) with the 23S rRNA of the 50S subunit in the ribosome. The protein is Small ribosomal subunit protein uS15 of Helicobacter pylori (strain P12).